A 517-amino-acid chain; its full sequence is Facilitated trehalose transporter Tret1 (517 aa).

Residues 1–56 are Cytoplasmic-facing; sequence MWIEIPECYEVLRNVFSKFRRHSLTAAMVKLLMRADTHVSFTVPAEEPVAKCTFSQ. Residues 57–77 traverse the membrane as a helical segment; that stretch reads VLAALSVSLGSMVVGFSSAYT. Topologically, residues 78 to 100 are extracellular; the sequence is SPALVSMKDRNITSFEVTDQSGS. The N-linked (GlcNAc...) asparagine glycan is linked to Asn-88. A helical transmembrane segment spans residues 101-121; it reads WVGGIMPLAGLVGGILGGPLI. The Cytoplasmic portion of the chain corresponds to 122-135; sequence EYLGRKNTILATAT. Residues 136-156 form a helical membrane-spanning segment; sequence PFIISWLLIACATHVAMVLVG. Residues 157 to 158 lie on the Extracellular side of the membrane; the sequence is RA. A helical membrane pass occupies residues 159–179; that stretch reads LSGFSVGVASLSLPVYLGETV. Over 180–184 the chain is Cytoplasmic; sequence QPEVR. The chain crosses the membrane as a helical span at residues 185–205; that stretch reads GTLGLLPTAFGNIGILLCFVA. Residues 206–212 lie on the Extracellular side of the membrane; sequence GNYMDWS. Residues 213 to 233 form a helical membrane-spanning segment; the sequence is ELAFLGATLPVPFLILMFLIP. At 234–296 the chain is on the cytoplasmic side; the sequence is ETPRWYVSRG…DLLKKTNLKP (63 aa). The helical transmembrane segment at 297-317 threads the bilayer; sequence LLISLGLMFFQQLSGINAVIF. Residues 318-333 are Extracellular-facing; that stretch reads YTVQIFQDAGSTIDEN. A helical transmembrane segment spans residues 334–354; that stretch reads LCTIIVGVVNFIATFIATLLI. Residues 355–360 are Cytoplasmic-facing; that stretch reads DRLGRK. The chain crosses the membrane as a helical span at residues 361 to 381; the sequence is MLLYISDIAMIITLMTLGGFF. Topologically, residues 382–392 are extracellular; sequence YVKNNGGDVSH. Residues 393–413 form a helical membrane-spanning segment; that stretch reads IGWLPLASFVIFVLGFSLGFG. Residues 414–437 lie on the Cytoplasmic side of the membrane; it reads PIPWLMMGEILPGKIRGSAASVAT. Residues 438–458 form a helical membrane-spanning segment; sequence AFNWSCTFVVTKTFADIIASI. The Extracellular portion of the chain corresponds to 459–461; it reads GTH. A helical transmembrane segment spans residues 462 to 482; sequence GAFWMFGSVCVVGLVFVIMYV. At 483–517 the chain is on the cytoplasmic side; sequence PETQGKSLEDIERKMCGRVRRMSSVANIKPLSFNM.

The protein belongs to the major facilitator superfamily. Sugar transporter (TC 2.A.1.1) family. Trehalose transporter subfamily.

The protein localises to the cell membrane. Functionally, high-capacity facilitative transporter for trehalose. Does not transport maltose, sucrose or lactose. Mediates the bidirectional transfer of trehalose. Responsible for the transport of trehalose synthesized in the fat body and the incorporation of trehalose into other tissues that require a carbon source, thereby regulating trehalose levels in the hemolymph. In Culex quinquefasciatus (Southern house mosquito), this protein is Facilitated trehalose transporter Tret1.